A 170-amino-acid chain; its full sequence is Lipocalin Cav p 2.0101 (170 aa).

Positions 1–16 (MMQILLLALAVSLACA) are cleaved as a signal peptide. 2 disulfides stabilise this stretch: C56–C60 and C75–C168.

The protein belongs to the calycin superfamily. Lipocalin family. Not N-linked glycosylated. In terms of tissue distribution, expressed in harderian gland (at protein level). Expressed in hair (at protein level). Expressed in submaxillary gland and harderian gland.

The protein resides in the secreted. This is Lipocalin Cav p 2.0101 (Lcncavp2) from Cavia porcellus (Guinea pig).